The chain runs to 200 residues: uncharacterized protein (200 aa).

This is an uncharacterized protein from Commelina yellow mottle virus (CoYMV).